The sequence spans 250 residues: 5-oxoprolinase subunit A (250 aa).

The protein belongs to the LamB/PxpA family. In terms of assembly, forms a complex composed of PxpA, PxpB and PxpC.

It carries out the reaction 5-oxo-L-proline + ATP + 2 H2O = L-glutamate + ADP + phosphate + H(+). In terms of biological role, catalyzes the cleavage of 5-oxoproline to form L-glutamate coupled to the hydrolysis of ATP to ADP and inorganic phosphate. The chain is 5-oxoprolinase subunit A from Thermus thermophilus (strain ATCC 27634 / DSM 579 / HB8).